A 93-amino-acid polypeptide reads, in one-letter code: Integration host factor subunit beta (93 aa).

The protein belongs to the bacterial histone-like protein family. Heterodimer of an alpha and a beta chain.

Its function is as follows. This protein is one of the two subunits of integration host factor, a specific DNA-binding protein that functions in genetic recombination as well as in transcriptional and translational control. The sequence is that of Integration host factor subunit beta (ihfB) from Cereibacter sphaeroides (strain ATCC 17023 / DSM 158 / JCM 6121 / CCUG 31486 / LMG 2827 / NBRC 12203 / NCIMB 8253 / ATH 2.4.1.) (Rhodobacter sphaeroides).